A 144-amino-acid polypeptide reads, in one-letter code: Succinate dehydrogenase cytochrome b560 subunit (144 aa).

Helical transmembrane passes span 40-60 (IFHRITGGVLALTLCFFILIL), 84-104 (GFLFIAISFFLLLFIFYHLFA), and 124-144 (LTGYIMLGLAFLFTLIAWIIF). His-101 is a heme binding site.

Belongs to the cytochrome b560 family. As to quaternary structure, forms part of complex II containing four subunits: a 70 kDa flavoprotein (FP), a 27 kDa iron-sulfur protein (IP), a cytochrome B and a membrane-anchoring protein. The cofactor is heme.

Its subcellular location is the mitochondrion inner membrane. The protein operates within carbohydrate metabolism; tricarboxylic acid cycle. Membrane-anchoring subunit of succinate dehydrogenase (SDH) that is involved in complex II of the mitochondrial electron transport chain and is responsible for transferring electrons from succinate to ubiquinone (coenzyme Q). The chain is Succinate dehydrogenase cytochrome b560 subunit (SDH3) from Reclinomonas americana.